A 698-amino-acid chain; its full sequence is Putative transposon gamma-delta 80.3 kDa protein (698 aa).

The polypeptide is Putative transposon gamma-delta 80.3 kDa protein (tnpX) (Escherichia coli (strain K12)).